A 128-amino-acid chain; its full sequence is Sulfurtransferase TusD (128 aa).

Cys-78 acts as the Cysteine persulfide intermediate in catalysis.

This sequence belongs to the DsrE/TusD family. In terms of assembly, heterohexamer, formed by a dimer of trimers. The hexameric TusBCD complex contains 2 copies each of TusB, TusC and TusD. The TusBCD complex interacts with TusE.

Its subcellular location is the cytoplasm. Its function is as follows. Part of a sulfur-relay system required for 2-thiolation of 5-methylaminomethyl-2-thiouridine (mnm(5)s(2)U) at tRNA wobble positions. Accepts sulfur from TusA and transfers it in turn to TusE. This is Sulfurtransferase TusD from Buchnera aphidicola subsp. Schizaphis graminum (strain Sg).